The primary structure comprises 154 residues: 6,7-dimethyl-8-ribityllumazine synthase (154 aa).

5-amino-6-(D-ribitylamino)uracil is bound by residues phenylalanine 21, 55-57, and 79-81; these read AFE and CVI. (2S)-2-hydroxy-3-oxobutyl phosphate is bound at residue 84 to 85; sequence AT. Residue histidine 87 is the Proton donor of the active site. Phenylalanine 112 contributes to the 5-amino-6-(D-ribitylamino)uracil binding site. Arginine 126 serves as a coordination point for (2S)-2-hydroxy-3-oxobutyl phosphate.

This sequence belongs to the DMRL synthase family. Forms an icosahedral capsid composed of 60 subunits, arranged as a dodecamer of pentamers.

The enzyme catalyses (2S)-2-hydroxy-3-oxobutyl phosphate + 5-amino-6-(D-ribitylamino)uracil = 6,7-dimethyl-8-(1-D-ribityl)lumazine + phosphate + 2 H2O + H(+). It functions in the pathway cofactor biosynthesis; riboflavin biosynthesis; riboflavin from 2-hydroxy-3-oxobutyl phosphate and 5-amino-6-(D-ribitylamino)uracil: step 1/2. Catalyzes the formation of 6,7-dimethyl-8-ribityllumazine by condensation of 5-amino-6-(D-ribitylamino)uracil with 3,4-dihydroxy-2-butanone 4-phosphate. This is the penultimate step in the biosynthesis of riboflavin. The polypeptide is 6,7-dimethyl-8-ribityllumazine synthase (Staphylococcus aureus (strain Newman)).